Consider the following 288-residue polypeptide: L-xylulose reductase (288 aa).

Residues Ile-39, Asn-113, and Lys-147 each coordinate NADP(+). Ser-181 (proton donor) is an active-site residue. Residues Tyr-196, Lys-200, Ile-228, and Thr-230 each coordinate NADP(+). Tyr-196 functions as the Proton acceptor in the catalytic mechanism. Lys-200 serves as the catalytic Lowers pKa of active site Tyr.

The protein belongs to the short-chain dehydrogenases/reductases (SDR) family.

It carries out the reaction xylitol + NADP(+) = L-xylulose + NADPH + H(+). Its pathway is carbohydrate degradation; L-arabinose degradation via L-arabinitol; D-xylulose 5-phosphate from L-arabinose (fungal route): step 3/5. Its function is as follows. L-xylulose reductase involved in the catabolism of L-arabinose through an oxidoreductive pathway. Catalyzes the NADPH-dependent reduction of L-xylulose. Is also able to convert D-xylulose, D-ribulose, L-sorbose, and D-fructose to their corresponding polyols. This chain is L-xylulose reductase, found in Hypocrea jecorina (strain QM6a) (Trichoderma reesei).